The following is a 486-amino-acid chain: N-succinylglutamate 5-semialdehyde dehydrogenase (486 aa).

220 to 225 (GSSRTG) serves as a coordination point for NAD(+). Residues Glu-243 and Cys-277 contribute to the active site.

The protein belongs to the aldehyde dehydrogenase family. AstD subfamily.

It carries out the reaction N-succinyl-L-glutamate 5-semialdehyde + NAD(+) + H2O = N-succinyl-L-glutamate + NADH + 2 H(+). Its pathway is amino-acid degradation; L-arginine degradation via AST pathway; L-glutamate and succinate from L-arginine: step 4/5. Functionally, catalyzes the NAD-dependent reduction of succinylglutamate semialdehyde into succinylglutamate. This chain is N-succinylglutamate 5-semialdehyde dehydrogenase, found in Shewanella sediminis (strain HAW-EB3).